Consider the following 227-residue polypeptide: Phosphatidylserine decarboxylase proenzyme (227 aa).

The active-site Schiff-base intermediate with substrate; via pyruvic acid is the Ser184. Residue Ser184 is modified to Pyruvic acid (Ser); by autocatalysis.

The protein belongs to the phosphatidylserine decarboxylase family. PSD-A subfamily. Heterodimer of a large membrane-associated beta subunit and a small pyruvoyl-containing alpha subunit. Pyruvate is required as a cofactor. Is synthesized initially as an inactive proenzyme. Formation of the active enzyme involves a self-maturation process in which the active site pyruvoyl group is generated from an internal serine residue via an autocatalytic post-translational modification. Two non-identical subunits are generated from the proenzyme in this reaction, and the pyruvate is formed at the N-terminus of the alpha chain, which is derived from the carboxyl end of the proenzyme. The post-translation cleavage follows an unusual pathway, termed non-hydrolytic serinolysis, in which the side chain hydroxyl group of the serine supplies its oxygen atom to form the C-terminus of the beta chain, while the remainder of the serine residue undergoes an oxidative deamination to produce ammonia and the pyruvoyl prosthetic group on the alpha chain.

Its subcellular location is the cell membrane. It catalyses the reaction a 1,2-diacyl-sn-glycero-3-phospho-L-serine + H(+) = a 1,2-diacyl-sn-glycero-3-phosphoethanolamine + CO2. It functions in the pathway phospholipid metabolism; phosphatidylethanolamine biosynthesis; phosphatidylethanolamine from CDP-diacylglycerol: step 2/2. Its function is as follows. Catalyzes the formation of phosphatidylethanolamine (PtdEtn) from phosphatidylserine (PtdSer). The sequence is that of Phosphatidylserine decarboxylase proenzyme from Ehrlichia ruminantium (strain Gardel).